Reading from the N-terminus, the 94-residue chain is MARRCELTGTGVLTGNNVSHAQNKSRRRFLPNLCDVTLASEKLGRGFKLRVAAKALRSVDHVGGLDVYLLKARDEKLSDKALKIKRDLKKAMAA.

It belongs to the bacterial ribosomal protein bL28 family.

This Maricaulis maris (strain MCS10) (Caulobacter maris) protein is Large ribosomal subunit protein bL28.